The sequence spans 95 residues: DNA-directed RNA polymerase subunit Rpo6 (95 aa).

This sequence belongs to the archaeal Rpo6/eukaryotic RPB6 RNA polymerase subunit family. Part of the RNA polymerase complex.

It localises to the cytoplasm. The catalysed reaction is RNA(n) + a ribonucleoside 5'-triphosphate = RNA(n+1) + diphosphate. In terms of biological role, DNA-dependent RNA polymerase (RNAP) catalyzes the transcription of DNA into RNA using the four ribonucleoside triphosphates as substrates. In Saccharolobus islandicus (strain M.16.27) (Sulfolobus islandicus), this protein is DNA-directed RNA polymerase subunit Rpo6.